Here is a 683-residue protein sequence, read N- to C-terminus: Long-chain-fatty-acid--CoA ligase 5 (683 aa).

Residues 12–32 form a helical; Signal-anchor for type III membrane protein membrane-spanning segment; the sequence is LPTPALICLLTFGTAIFLWLI. Residues 33–683 are Cytoplasmic-facing; that stretch reads NRPQPVLPLI…IKSLYESIEE (651 aa). The residue at position 361 (K361) is an N6-acetyllysine.

The protein belongs to the ATP-dependent AMP-binding enzyme family. In terms of tissue distribution, expressed most abundantly in the small intestine, and to a much lesser extent in the lung, liver, adrenal gland, adipose tissue and kidney.

The protein resides in the mitochondrion. It is found in the endoplasmic reticulum. It localises to the mitochondrion outer membrane. The protein localises to the endoplasmic reticulum membrane. Its subcellular location is the cell membrane. The enzyme catalyses a long-chain fatty acid + ATP + CoA = a long-chain fatty acyl-CoA + AMP + diphosphate. It carries out the reaction (5Z,8Z,11Z,14Z)-eicosatetraenoate + ATP + CoA = (5Z,8Z,11Z,14Z)-eicosatetraenoyl-CoA + AMP + diphosphate. It catalyses the reaction 15-hydroxy-(5Z,8Z,11Z,13E)-eicosatetraenoate + ATP + CoA = 15-hydroxy-(5Z,8Z,11Z,13E)-eicosatetraenoyl-CoA + AMP + diphosphate. The catalysed reaction is 12-hydroxy-(5Z,8Z,10E,14Z)-eicosatetraenoate + ATP + CoA = 12-hydroxy-(5Z,8Z,10E,14Z)-eicosatetraenoyl-CoA + AMP + diphosphate. The enzyme catalyses 5-hydroxy-(6E,8Z,11Z,14Z)-eicosatetraenoate + ATP + CoA = 5-hydroxy-(6E,8Z,11Z,14Z)-eicosatetraenoyl-CoA + AMP + diphosphate. It carries out the reaction 14,15-epoxy-(5Z,8Z,11Z)-eicosatrienoate + ATP + CoA = 14,15-epoxy-(5Z,8Z,11Z)-eicosatrienoyl-CoA + AMP + diphosphate. It catalyses the reaction 11,12-epoxy-(5Z,8Z,14Z)-eicosatrienoate + ATP + CoA = 11,12-epoxy-(5Z,8Z,14Z)-eicosatrienoyl-CoA + AMP + diphosphate. The catalysed reaction is hexadecanoate + ATP + CoA = hexadecanoyl-CoA + AMP + diphosphate. The enzyme catalyses (E)-hexadec-2-enoate + ATP + CoA = (2E)-hexadecenoyl-CoA + AMP + diphosphate. It carries out the reaction (9Z)-octadecenoate + ATP + CoA = (9Z)-octadecenoyl-CoA + AMP + diphosphate. In terms of biological role, catalyzes the conversion of long-chain fatty acids to their active form acyl-CoAs for both synthesis of cellular lipids, and degradation via beta-oxidation. ACSL5 may sensitize epithelial cells to apoptosis specifically triggered by the death ligand TRAIL at the villus tip of the crypt-villus axis of the small intestine. May have a role in the survival of glioma cells. May activate fatty acids from exogenous sources for the synthesis of triacylglycerol destined for intracellular storage. It was suggested that it may also stimulate fatty acid oxidation. Utilizes a wide range of saturated fatty acids with a preference for C16-C18 unsaturated fatty acids. In Rattus norvegicus (Rat), this protein is Long-chain-fatty-acid--CoA ligase 5.